We begin with the raw amino-acid sequence, 198 residues long: Na(+)-translocating NADH-quinone reductase subunit E (198 aa).

6 helical membrane-spanning segments follow: residues S11–V31, V35–V55, F77–I97, G110–V130, V140–L160, and L176–I196.

The protein belongs to the NqrDE/RnfAE family. As to quaternary structure, composed of six subunits; NqrA, NqrB, NqrC, NqrD, NqrE and NqrF.

It is found in the cell inner membrane. It carries out the reaction a ubiquinone + n Na(+)(in) + NADH + H(+) = a ubiquinol + n Na(+)(out) + NAD(+). Functionally, NQR complex catalyzes the reduction of ubiquinone-1 to ubiquinol by two successive reactions, coupled with the transport of Na(+) ions from the cytoplasm to the periplasm. NqrA to NqrE are probably involved in the second step, the conversion of ubisemiquinone to ubiquinol. The polypeptide is Na(+)-translocating NADH-quinone reductase subunit E (Haemophilus ducreyi (strain 35000HP / ATCC 700724)).